Here is a 1096-residue protein sequence, read N- to C-terminus: Protein EMBRYONIC FLOWER 1 (1096 aa).

Disordered stretches follow at residues 155-189, 274-296, 315-348, 366-420, 563-612, 629-651, 1007-1032, and 1070-1096; these read KARG…EKLN, KTSG…VRGR, GATS…KGKQ, ETSQ…KKPV, LSRV…DIPM, DKEE…KNAL, DKEK…KNSS, and FKKK…TQNA. 2 short sequence motifs (nuclear localization signal) span residues 170–177 and 281–288; these read SRKLVSPE and IRKEESAL. A compositionally biased stretch (basic and acidic residues) spans 281–294; the sequence is IRKEESALKKESVR. Over residues 315-337 the composition is skewed to polar residues; it reads GATSENASKSCDSDQGNSESTDS. The DNA-binding stretch occupies residues 337 to 617; sequence SGFDRTPFKG…DDIPMEIVEL (281 aa). The segment covering 371–381 has biased composition (basic and acidic residues); that stretch reads GIKEHDADPSK. The segment covering 382–394 has biased composition (polar residues); that stretch reads RSTPAHSLFTGND. Positions 572–601 are enriched in basic and acidic residues; sequence SGADRKGKTVMVQEHHGAPRSQSHDRKETT. The segment at 866–1096 is DNA-binding; it reads LDPRLRSTTP…KPVCPPTQNA (231 aa). Residues 1018-1032 show a composition bias toward polar residues; that stretch reads SCNNNASAGPVKNSS. The Nuclear localization signal 3 signature appears at 1071-1078; that stretch reads KKKPAVCK.

Interacts with MSI1. As to expression, expressed in mature embryo, root tips, cotyledons, leaves, stems, shoot apex, and flower clusters, with highest levels in flowers. The presence in the shoot apical meristem (SAM) is required to maintain vegetative development and prevent early flowering.

The protein resides in the nucleus. Functionally, transcription repressor that regulates phase transition during shoot, flower and seeds development. Controls leaves development, shoot architecture and flowering by delaying both the vegetative to reproductive transition and flower initiation. Participates in polycomb group (PcG) protein complex-mediated (including EMF2) silencing of the flower homeotic genes AGAMOUS (AG), PISTILLATA (PI), and APETALA3 (AP3), as well as of some regulatory genes such as ABSCISIC ACID INSENSITIVE3 (ABI3), LONG VEGETATIVE PHASE1 (LOV1), and FLOWERING LOCUS C (FLC) during vegetative development. Required for histone methylation or for maintaining a stable histone methylation (e.g. H3K27me3) pattern of repressed target genes (including genes involved in salt stress response and flower development); this repression is counteracted by ULT1. Can bind non specifically DNA (both double- and single-stranded) and RNA. The protein is Protein EMBRYONIC FLOWER 1 of Arabidopsis thaliana (Mouse-ear cress).